Here is a 322-residue protein sequence, read N- to C-terminus: Beta-ketoacyl-[acyl-carrier-protein] synthase III (322 aa).

Active-site residues include Cys113 and His249. The ACP-binding stretch occupies residues 250–254; sequence QANLR. Asn279 is an active-site residue.

The protein belongs to the thiolase-like superfamily. FabH family. Homodimer.

Its subcellular location is the cytoplasm. The catalysed reaction is malonyl-[ACP] + acetyl-CoA + H(+) = 3-oxobutanoyl-[ACP] + CO2 + CoA. It functions in the pathway lipid metabolism; fatty acid biosynthesis. Its function is as follows. Catalyzes the condensation reaction of fatty acid synthesis by the addition to an acyl acceptor of two carbons from malonyl-ACP. Catalyzes the first condensation reaction which initiates fatty acid synthesis and may therefore play a role in governing the total rate of fatty acid production. Possesses both acetoacetyl-ACP synthase and acetyl transacylase activities. Its substrate specificity determines the biosynthesis of branched-chain and/or straight-chain of fatty acids. The polypeptide is Beta-ketoacyl-[acyl-carrier-protein] synthase III (Marinobacter nauticus (strain ATCC 700491 / DSM 11845 / VT8) (Marinobacter aquaeolei)).